An 87-amino-acid polypeptide reads, in one-letter code: Large ribosomal subunit protein bL27 (87 aa).

The tract at residues 1-21 (MAHKKAGGSSRNGRDSESKRL) is disordered.

It belongs to the bacterial ribosomal protein bL27 family.

The sequence is that of Large ribosomal subunit protein bL27 from Burkholderia ambifaria (strain MC40-6).